The sequence spans 720 residues: Pollen receptor-like kinase 1 (720 aa).

An LRR 1; degenerate repeat occupies 40-64; it reads LCSRGHLLIIFLLLVSPFNDAAVDV. An LRR 2; degenerate repeat occupies 123–146; sequence LGVLCYEGDVWGLQLENLDLSGVI. 3 LRR repeats span residues 154–179, 226–248, and 249–273; these read LHFL…SLEP, LPQV…HFPP, and NVLK…SLMD. The segment at 288–319 is disordered; sequence LESACNSPSQEANNPDSRNSSTISGQSSTDVI. Positions 291–317 are enriched in polar residues; the sequence is ACNSPSQEANNPDSRNSSTISGQSSTD. Residues 330-350 form a helical membrane-spanning segment; it reads MLIVAVCLVVLCLLIVLILII. Polar residues-rich tracts occupy residues 356 to 382 and 389 to 405; these read SSSQ…TSSA and LSGN…NSNK. The disordered stretch occupies residues 356–409; the sequence is SSSQNPQPVESNYSNNDRDQNAFTSSAPDDHVTLSGNSTYSNNQHSNSNKAEAP. Residues 434-702 enclose the Protein kinase domain; sequence RASAEVLGSG…KEVVQSIQSL (269 aa). Residues 440 to 448 and lysine 462 each bind ATP; that span reads LGSGNLGSS.

The protein belongs to the protein kinase superfamily. In terms of assembly, interacts with KIP1. Autophosphorylated. Expressed in mature pollen grains and pollen tubes, but not in style, petal, leaf, root or sepal. Very low expression in the ovary.

Its subcellular location is the microsome membrane. It is found in the cytoplasm. The catalysed reaction is L-seryl-[protein] + ATP = O-phospho-L-seryl-[protein] + ADP + H(+). It catalyses the reaction L-threonyl-[protein] + ATP = O-phospho-L-threonyl-[protein] + ADP + H(+). It carries out the reaction L-tyrosyl-[protein] + ATP = O-phospho-L-tyrosyl-[protein] + ADP + H(+). In terms of biological role, dual-specificity kinase with both serine/threonine and tyrosine kinase activities. Required for postmeiotic development of microspores. Involved in embryo sac development at the late stages of megagametogenesis. Involved in the phosphorylation of KIP1. The sequence is that of Pollen receptor-like kinase 1 from Petunia integrifolia (Violet-flowered petunia).